Reading from the N-terminus, the 1138-residue chain is Protein RECOGNITION OF PERONOSPORA PARASITICA 7 (1138 aa).

The NB-ARC domain maps to 166–422; sequence EENVKKLVGY…CNYVLSLSFE (257 aa). ATP is bound at residue 189–196; sequence GMGGLGKT. LRR repeat units follow at residues 544–565, 566–581, 582–606, 607–631, 655–680, 681–705, 707–726, 727–752, 754–774, 775–797, 798–825, 847–871, 873–893, 894–918, 940–963, 1028–1050, 1055–1078, 1079–1103, and 1115–1138; these read QYPT…SLVV, VTLG…FTRL, ELLR…IGKL, IHLR…NLKL, MQEL…NLVK, LETL…RLRT, TIEL…IGGL, KYLE…VFDF, HLKR…QHFP, SHLT…ILEK, LLQL…GFPQ, MPLL…HLPS, LTAI…LERL, VHLK…GFPQ, MPRL…GFPQ, LEKL…RMVC, FPQL…QGSM, PLLH…RFIY, and KKRL…EFDD.

It belongs to the disease resistance NB-LRR family.

Functionally, disease resistance protein required for incompatible interactions with avirulent strains of Hyaloperonospora arabidopsidis (downy mildew), isolate Hpa-Hiks1 in cv. Columbia. This chain is Protein RECOGNITION OF PERONOSPORA PARASITICA 7, found in Arabidopsis thaliana (Mouse-ear cress).